The chain runs to 261 residues: 5'-nucleotidase SurE (261 aa).

Residues D8, D9, S43, and N96 each contribute to the a divalent metal cation site.

It belongs to the SurE nucleotidase family. It depends on a divalent metal cation as a cofactor.

It localises to the cytoplasm. It catalyses the reaction a ribonucleoside 5'-phosphate + H2O = a ribonucleoside + phosphate. Nucleotidase that shows phosphatase activity on nucleoside 5'-monophosphates. This Cereibacter sphaeroides (strain ATCC 17025 / ATH 2.4.3) (Rhodobacter sphaeroides) protein is 5'-nucleotidase SurE.